A 134-amino-acid chain; its full sequence is Profilin-1 (134 aa).

A disulfide bond links C13 and C118. Residues 84-100 (AVIRGKKGSGGITTKKT) carry the Involved in PIP2 interaction motif. Residue T114 is modified to Phosphothreonine.

The protein belongs to the profilin family. Occurs in many kinds of cells as a complex with monomeric actin in a 1:1 ratio. Post-translationally, phosphorylated by MAP kinases.

It is found in the cytoplasm. It localises to the cytoskeleton. Binds to actin and affects the structure of the cytoskeleton. At high concentrations, profilin prevents the polymerization of actin, whereas it enhances it at low concentrations. This chain is Profilin-1, found in Olea europaea (Common olive).